Consider the following 332-residue polypeptide: Procathepsin L (332 aa).

Positions 1–17 (MHPLLFLAGLCLGVASA) are cleaved as a signal peptide. A propeptide spans 18 to 112 (APQLYQSLDA…KVFQAPFFVE (95 aa)) (activation peptide). Zn(2+) is bound at residue Glu-121. Cys-137 is an active-site residue. Zn(2+)-binding residues include Glu-162, Asp-183, Glu-198, and Asp-208. Cys-168 and Cys-210 are disulfide-bonded. A glycan (N-linked (GlcNAc...) asparagine) is linked at Asn-220. Zn(2+) is bound by residues Asp-226, Asp-249, Asp-272, and Asp-274. Residues Cys-268 and Cys-321 are joined by a disulfide bond. His-275 is an active-site residue. Positions 288–290 (ETE) are excised as a propeptide. Asn-299 is a catalytic residue.

Belongs to the peptidase C1 family. As to quaternary structure, dimer of a heavy and a light chain linked by disulfide bonds. Interacts with Long isoform of CD74/Ii chain; the interaction stabilizes the conformation of mature CTSL. During export along the endocytic pathway, pro-CTSL undergoes several proteolytic cleavages to generate the CTSL single-chain and two-chain mature forms, composed of a heavy chain linked to a light chain by disulfide bonds. Autocleavage; produces the single-chain CTSL after cleavage of the propeptide. The cleavage can be intermolecular. In terms of tissue distribution, expressed in the endometrium.

Its subcellular location is the lysosome. It is found in the apical cell membrane. It localises to the cytoplasmic vesicle. The protein localises to the secretory vesicle. The protein resides in the chromaffin granule. Its subcellular location is the secreted. It is found in the extracellular space. It catalyses the reaction Specificity close to that of papain. As compared to cathepsin B, cathepsin L exhibits higher activity toward protein substrates, but has little activity on Z-Arg-Arg-NHMec, and no peptidyl-dipeptidase activity.. Its activity is regulated as follows. Inhibited by the propeptide produced by autocleavage. Long isoform of CD74/Ii chain stabilizes the conformation of mature CTSL by binding to its active site and serving as a chaperone to help maintain a pool of mature enzyme in endocytic compartments and extracellular space of APCs. IFNG enhances the conversion into the CTSL mature and active form. Inhibited by CST6. Inhibited by the glycopeptide antibiotic teicoplanin. Inhibited by amantadine. Its function is as follows. Thiol protease important for the overall degradation of proteins in lysosomes. Plays a critical for normal cellular functions such as general protein turnover, antigen processing and bone remodeling. Involved in the solubilization of cross-linked TG/thyroglobulin and in the subsequent release of thyroid hormone thyroxine (T4) by limited proteolysis of TG/thyroglobulin in the thyroid follicle lumen. In neuroendocrine chromaffin cells secretory vesicles, catalyzes the prohormone proenkephalin processing to the active enkephalin peptide neurotransmitter. In thymus, regulates CD4(+) T cell positive selection by generating the major histocompatibility complex class II (MHCII) bound peptide ligands presented by cortical thymic epithelial cells. Also mediates invariant chain processing in cortical thymic epithelial cells. Major elastin-degrading enzyme at neutral pH. Accumulates as a mature and active enzyme in the extracellular space of antigen presenting cells (APCs) to regulate degradation of the extracellular matrix in the course of inflammation. Secreted form generates endostatin from COL18A1. Critical for cardiac morphology and function. Plays an important role in hair follicle morphogenesis and cycling, as well as epidermal differentiation. Required for maximal stimulation of steroidogenesis by TIMP1. This chain is Procathepsin L (CTSL), found in Felis catus (Cat).